A 79-amino-acid polypeptide reads, in one-letter code: uncharacterized protein (79 aa).

A signal peptide spans 1-24 (MNKFLNLIGLAFVLVLCAFSCSNA). The region spanning 32 to 78 (SWHVAQKGYTCYDMATSCKVTLDQFMRTNKLDNNACKLVQIGRKYCC) is the LysM domain.

Its subcellular location is the secreted. This is an uncharacterized protein from Dictyostelium discoideum (Social amoeba).